The primary structure comprises 833 residues: Major vault protein (833 aa).

8 MVP repeats span residues Arg10–Pro52, Arg54–Gln115, Pro119–Tyr170, Pro171–Ser223, Glu224–Asn278, Lys280–Gly328, Lys329–Asp380, and Arg381–Thr433.

In terms of assembly, the vault ribonucleoprotein particle is a huge (400 A x 670 A) cage structure of 12.9 MDa. It consists of a dimer of half-vaults, with each half-vault comprising 39 identical major vault protein (MVP) chains, PARP4 and one or more vault RNAs (vRNAs).

The protein resides in the cytoplasm. The protein localises to the nucleus. In terms of biological role, required for normal vault structure. Vaults are multi-subunit structures that may act as scaffolds for proteins involved in signal transduction. Vaults may also play a role in nucleo-cytoplasmic transport. This Leishmania braziliensis protein is Major vault protein.